A 349-amino-acid chain; its full sequence is GTP 3',8-cyclase (349 aa).

A Radical SAM core domain is found at 24–249 (PFGRAVTYLR…KDMSYRTGGP (226 aa)). R33 provides a ligand contact to GTP. [4Fe-4S] cluster contacts are provided by C40 and C44. Y46 is an S-adenosyl-L-methionine binding site. C47 contacts [4Fe-4S] cluster. Residue R82 participates in GTP binding. Residue G86 coordinates S-adenosyl-L-methionine. T116 is a binding site for GTP. S140 serves as a coordination point for S-adenosyl-L-methionine. K176 is a binding site for GTP. Position 210 (M210) interacts with S-adenosyl-L-methionine. Residues C273 and C276 each coordinate [4Fe-4S] cluster. 278–280 (RVR) is a GTP binding site. C290 contributes to the [4Fe-4S] cluster binding site.

Belongs to the radical SAM superfamily. MoaA family. As to quaternary structure, monomer and homodimer. [4Fe-4S] cluster serves as cofactor.

The enzyme catalyses GTP + AH2 + S-adenosyl-L-methionine = (8S)-3',8-cyclo-7,8-dihydroguanosine 5'-triphosphate + 5'-deoxyadenosine + L-methionine + A + H(+). Its pathway is cofactor biosynthesis; molybdopterin biosynthesis. Catalyzes the cyclization of GTP to (8S)-3',8-cyclo-7,8-dihydroguanosine 5'-triphosphate. The protein is GTP 3',8-cyclase of Sinorhizobium medicae (strain WSM419) (Ensifer medicae).